The following is a 380-amino-acid chain: Gonadotropin-releasing hormone II receptor (380 aa).

Topologically, residues 1–40 (MSAVNGTPWGSSAREEVWAGSGVEVEGSELPTFSTAAKVR) are extracellular. A helical transmembrane segment spans residues 41-60 (VGVTIVLFVSSAGGNLAVLW). At 61–76 (SVTRPQPSQLRPSPVR) the chain is on the cytoplasmic side. The helical transmembrane segment at 77–96 (RLFAHLAAADLLVTFVVMPL) threads the bilayer. Over 97 to 114 (DATWNITVQWLAGDIACR) the chain is Extracellular. N-linked (GlcNAc...) asparagine glycosylation is present at Asn101. The cysteines at positions 113 and 188 are disulfide-linked. The helical transmembrane segment at 115–136 (TLMFLKLMAMYAAAFLPVVIGL) threads the bilayer. The Cytoplasmic segment spans residues 137–160 (DRQAAVLNPLGSRSGVRKLLGAAW). The chain crosses the membrane as a helical span at residues 161-178 (GLSFLLALPQLFLFHTVH). Topologically, residues 179 to 204 (RAGPVPFTQCATKGSFKARWQETTYN) are extracellular. Residues 205-224 (LFTFCCLFLLPLTAMAICYS) form a helical membrane-spanning segment. At 225–278 (RIVLGVSSPRTRKGSHAPAGEFALRRSFDNRPRVRLRALRLALLVLLTFILCWT) the chain is on the cytoplasmic side. The helical transmembrane segment at 279-297 (PYYLLGLWYWFSPSMLSEV) threads the bilayer. Topologically, residues 298 to 303 (PPSLSH) are extracellular. The helical transmembrane segment at 304 to 323 (ILFLFGLLNAPLDPLLYGAF) threads the bilayer. The Cytoplasmic portion of the chain corresponds to 324-380 (TLGCRRGHQELSMDSSREEGSRRMFQQDIQALRQTEVQKTVTSRKAGETKDIPITSI).

This sequence belongs to the G-protein coupled receptor 1 family. Phosphorylated on the C-terminal cytoplasmic tail.

The protein localises to the cell membrane. In terms of biological role, receptor for gonadotropin releasing hormone II (GnRH II). This receptor mediates its action by association with G proteins that activate a phosphatidylinositol-calcium second messenger system. In Callithrix jacchus (White-tufted-ear marmoset), this protein is Gonadotropin-releasing hormone II receptor (GNRHR2).